We begin with the raw amino-acid sequence, 278 residues long: Formamidopyrimidine-DNA glycosylase (278 aa).

Residue proline 2 is the Schiff-base intermediate with DNA of the active site. Glutamate 3 functions as the Proton donor in the catalytic mechanism. Catalysis depends on lysine 57, which acts as the Proton donor; for beta-elimination activity. 3 residues coordinate DNA: histidine 90, arginine 109, and lysine 150. The FPG-type zinc finger occupies 235–269 (QVYGRAGEPCRQCGHPIEIAKHGQRSTFFCRHCQF). The active-site Proton donor; for delta-elimination activity is the arginine 259.

Belongs to the FPG family. In terms of assembly, monomer. Zn(2+) is required as a cofactor.

It catalyses the reaction Hydrolysis of DNA containing ring-opened 7-methylguanine residues, releasing 2,6-diamino-4-hydroxy-5-(N-methyl)formamidopyrimidine.. It carries out the reaction 2'-deoxyribonucleotide-(2'-deoxyribose 5'-phosphate)-2'-deoxyribonucleotide-DNA = a 3'-end 2'-deoxyribonucleotide-(2,3-dehydro-2,3-deoxyribose 5'-phosphate)-DNA + a 5'-end 5'-phospho-2'-deoxyribonucleoside-DNA + H(+). Involved in base excision repair of DNA damaged by oxidation or by mutagenic agents. Acts as a DNA glycosylase that recognizes and removes damaged bases. Has a preference for oxidized purines, such as 7,8-dihydro-8-oxoguanine (8-oxoG). Has AP (apurinic/apyrimidinic) lyase activity and introduces nicks in the DNA strand. Cleaves the DNA backbone by beta-delta elimination to generate a single-strand break at the site of the removed base with both 3'- and 5'-phosphates. This Yersinia pestis (strain Pestoides F) protein is Formamidopyrimidine-DNA glycosylase.